Consider the following 225-residue polypeptide: Uracil-DNA glycosylase 1 (225 aa).

Asp-68 functions as the Proton acceptor in the catalytic mechanism.

The protein belongs to the uracil-DNA glycosylase (UDG) superfamily. UNG family.

Its subcellular location is the cytoplasm. It catalyses the reaction Hydrolyzes single-stranded DNA or mismatched double-stranded DNA and polynucleotides, releasing free uracil.. Functionally, excises uracil residues from the DNA which can arise as a result of misincorporation of dUMP residues by DNA polymerase or due to deamination of cytosine. This chain is Uracil-DNA glycosylase 1 (ung1), found in Streptomyces coelicolor (strain ATCC BAA-471 / A3(2) / M145).